The chain runs to 427 residues: Serine--tRNA ligase (427 aa).

231-233 (TAE) serves as a coordination point for L-serine. 262 to 264 (RSE) is a binding site for ATP. Glu-285 provides a ligand contact to L-serine. An ATP-binding site is contributed by 349 to 352 (EISS). Ser-385 is a binding site for L-serine.

Belongs to the class-II aminoacyl-tRNA synthetase family. Type-1 seryl-tRNA synthetase subfamily. In terms of assembly, homodimer. The tRNA molecule binds across the dimer.

The protein localises to the cytoplasm. The catalysed reaction is tRNA(Ser) + L-serine + ATP = L-seryl-tRNA(Ser) + AMP + diphosphate + H(+). The enzyme catalyses tRNA(Sec) + L-serine + ATP = L-seryl-tRNA(Sec) + AMP + diphosphate + H(+). It participates in aminoacyl-tRNA biosynthesis; selenocysteinyl-tRNA(Sec) biosynthesis; L-seryl-tRNA(Sec) from L-serine and tRNA(Sec): step 1/1. Catalyzes the attachment of serine to tRNA(Ser). Is also able to aminoacylate tRNA(Sec) with serine, to form the misacylated tRNA L-seryl-tRNA(Sec), which will be further converted into selenocysteinyl-tRNA(Sec). This chain is Serine--tRNA ligase, found in Methylococcus capsulatus (strain ATCC 33009 / NCIMB 11132 / Bath).